A 1944-amino-acid polypeptide reads, in one-letter code: Anaphase-promoting complex subunit 1 (1944 aa).

Phosphoserine occurs at positions 51, 60, 202, and 286. Threonine 291 is modified (phosphothreonine). The segment at 305–343 (LRSLSKGDSPVTSPFQNYSSIHSQSRSTSSPSLHSRSPS) is disordered. Serine 313, serine 341, serine 343, serine 355, serine 362, serine 373, and serine 377 each carry phosphoserine. Positions 323–343 (SSIHSQSRSTSSPSLHSRSPS) are enriched in low complexity. Positions 373-396 (SHNQSPKRHSISHSPNSNSNGSFL) are disordered. Over residues 384 to 394 (SHSPNSNSNGS) the composition is skewed to low complexity. At threonine 537 the chain carries Phosphothreonine. Phosphoserine occurs at positions 547 and 555. Position 571 is a phosphotyrosine (tyrosine 571). 3 positions are modified to phosphoserine: serine 686, serine 688, and serine 916. The disordered stretch occupies residues 994–1016 (KGKSVLSSDVPSGTETEEEDDGM). The segment covering 998–1007 (VLSSDVPSGT) has biased composition (polar residues). PC repeat units follow at residues 1297-1325 (AAGL…PEQL), 1366-1404 (GATL…PEFL), 1467-1501 (GACL…YLSA), and 1520-1552 (LLSL…EMNY).

It belongs to the APC1 family. As to quaternary structure, the mammalian APC/C is composed at least of 14 distinct subunits ANAPC1, ANAPC2, CDC27/APC3, ANAPC4, ANAPC5, CDC16/APC6, ANAPC7, CDC23/APC8, ANAPC10, ANAPC11, CDC26/APC12, ANAPC13, ANAPC15 and ANAPC16 that assemble into a complex of at least 19 chains with a combined molecular mass of around 1.2 MDa; APC/C interacts with FZR1 and FBXO5. In terms of processing, phosphorylated. Phosphorylation on Ser-355 occurs specifically during mitosis.

It functions in the pathway protein modification; protein ubiquitination. Its function is as follows. Component of the anaphase promoting complex/cyclosome (APC/C), a cell cycle-regulated E3 ubiquitin ligase that controls progression through mitosis and the G1 phase of the cell cycle. The APC/C complex acts by mediating ubiquitination and subsequent degradation of target proteins: it mainly mediates the formation of 'Lys-11'-linked polyubiquitin chains and, to a lower extent, the formation of 'Lys-48'- and 'Lys-63'-linked polyubiquitin chains. The APC/C complex catalyzes assembly of branched 'Lys-11'-/'Lys-48'-linked branched ubiquitin chains on target proteins. This Homo sapiens (Human) protein is Anaphase-promoting complex subunit 1 (ANAPC1).